We begin with the raw amino-acid sequence, 226 residues long: Fibrillarin-like rRNA/tRNA 2'-O-methyltransferase (226 aa).

S-adenosyl-L-methionine-binding positions include 82 to 83 (TT), 100 to 101 (EF), 125 to 126 (DA), and 145 to 148 (DVAQ).

It belongs to the methyltransferase superfamily. Fibrillarin family. Interacts with nop5. Component of box C/D small ribonucleoprotein (sRNP) particles that contain rpl7ae, FlpA and nop5, plus a guide RNA.

Involved in pre-rRNA and tRNA processing. Utilizes the methyl donor S-adenosyl-L-methionine to catalyze the site-specific 2'-hydroxyl methylation of ribose moieties in rRNA and tRNA. Site specificity is provided by a guide RNA that base pairs with the substrate. Methylation occurs at a characteristic distance from the sequence involved in base pairing with the guide RNA. The polypeptide is Fibrillarin-like rRNA/tRNA 2'-O-methyltransferase (Methanosarcina barkeri (strain Fusaro / DSM 804)).